Reading from the N-terminus, the 727-residue chain is Elongation factor 2 (727 aa).

Positions 19 to 260 (DQIRNMGICA…MSIKHLPNPL (242 aa)) constitute a tr-type G domain. Residues 28-35 (AHIDHGKT), 94-98 (DTPGH), and 148-151 (NKVD) contribute to the GTP site. His-603 is modified (diphthamide).

This sequence belongs to the TRAFAC class translation factor GTPase superfamily. Classic translation factor GTPase family. EF-G/EF-2 subfamily.

The protein resides in the cytoplasm. Catalyzes the GTP-dependent ribosomal translocation step during translation elongation. During this step, the ribosome changes from the pre-translocational (PRE) to the post-translocational (POST) state as the newly formed A-site-bound peptidyl-tRNA and P-site-bound deacylated tRNA move to the P and E sites, respectively. Catalyzes the coordinated movement of the two tRNA molecules, the mRNA and conformational changes in the ribosome. This chain is Elongation factor 2, found in Methanococcus maripaludis (strain C5 / ATCC BAA-1333).